The following is a 203-amino-acid chain: Small ribosomal subunit protein uS4 (203 aa).

An S4 RNA-binding domain is found at 93-154 (RRLDNVVYRC…KSRNLDAVAD (62 aa)).

The protein belongs to the universal ribosomal protein uS4 family. Part of the 30S ribosomal subunit. Contacts protein S5. The interaction surface between S4 and S5 is involved in control of translational fidelity.

One of the primary rRNA binding proteins, it binds directly to 16S rRNA where it nucleates assembly of the body of the 30S subunit. In terms of biological role, with S5 and S12 plays an important role in translational accuracy. The chain is Small ribosomal subunit protein uS4 from Chlorobaculum tepidum (strain ATCC 49652 / DSM 12025 / NBRC 103806 / TLS) (Chlorobium tepidum).